The primary structure comprises 491 residues: Protein DETOXIFICATION 20 (491 aa).

A run of 12 helical transmembrane segments spans residues 37 to 57, 75 to 95, 120 to 140, 156 to 176, 185 to 205, 214 to 234, 265 to 285, 296 to 316, 337 to 357, 381 to 401, 413 to 433, and 438 to 458; these read LWVV…VSMV, ITFT…AGAL, IVLT…GPIL, LALW…CQMF, IISY…WLLV, GAMT…LLYV, GGML…TGNL, AICI…LAAV, LIAV…FLFL, LLAF…VAIG, LACY…VVGL, and VWIG…VMTL.

It belongs to the multi antimicrobial extrusion (MATE) (TC 2.A.66.1) family.

The protein resides in the membrane. The polypeptide is Protein DETOXIFICATION 20 (Arabidopsis thaliana (Mouse-ear cress)).